The chain runs to 132 residues: Small ribosomal subunit protein uS8c (132 aa).

It belongs to the universal ribosomal protein uS8 family. In terms of assembly, part of the 30S ribosomal subunit.

It localises to the plastid. Its subcellular location is the chloroplast. Functionally, one of the primary rRNA binding proteins, it binds directly to 16S rRNA central domain where it helps coordinate assembly of the platform of the 30S subunit. The protein is Small ribosomal subunit protein uS8c (rps8) of Dioscorea elephantipes (Elephant's foot yam).